Consider the following 676-residue polypeptide: Palmitoyl-CoA ligase FUM16 (676 aa).

I245–N256 provides a ligand contact to AMP. Positions K552–L655 are AMP-binding.

It belongs to the ATP-dependent AMP-binding enzyme family.

It is found in the endoplasmic reticulum. The protein operates within mycotoxin biosynthesis. Its function is as follows. Palmitoyl-CoA ligase; part of the gene cluster that mediates the biosynthesis of fumonisins B1 (FB1), B2 (FB2), B3 (FB3), and B4 (FB4), which are carcinogenic mycotoxins. Plays a role in the synthesis of ceramide and is involved in self-protection from fumonisin B1 toxicity. The biosynthesis starts with the FUM1-catalyzed carbon chain assembly from one molecule of acetyl-CoA, eight molecules of malonyl-CoA, and two molecules of methionine (in S-adenosyl form). The C18 polyketide chain is released from the enzyme by a nucleophilic attack of a carbanion, which is derived from R-carbon of alanine by decarboxylation, on the carbonyl carbon of polyketide acyl chain. This step is catalyzed by the pyridoxal 5'-phosphate-dependent aminoacyl transferase FUM8. The resultant 3-keto intermediate is then stereospecifically reduced to a 3-hydroxyl product by reductase FUM13. Subsequent oxidations at C-10 by the cytochrome P450 monooxygenase FUM2, C-14 and C-15 by FUM6, FUM12 or FUM15, tricarballylic esterification of the hydroxyl groups on C-14 and C-15 by acyltransferase FUM14, and C-5 hydroxylation by 2-keto-glutarate-dependent dioxygenase FUM3 furnish the biosynthesis of fumonisins. The tricarballylic moieties are most likely derived from the citric acid cycle, and their addition to the carbon backbone may involve FUM7, FUM10, FUM11 and FUM14. The polypeptide is Palmitoyl-CoA ligase FUM16 (Gibberella moniliformis (strain M3125 / FGSC 7600) (Maize ear and stalk rot fungus)).